The primary structure comprises 3661 residues: MDVSQCEHWHNRLCDVGLDSKQKANTAIEIRDALDDVLVTEKTNFETFIPLLEDTLSLLEKERPVFSSLAATHRLRIALLELLKKSGSYKGFEAFVNRTFAVLLRIVVNDNEEMAVLALKLVVLLFKDHSSLAKGHVQEFLSIVVENYKSMTTVVSEAFPPRSAPNTPSSHPMSAASSASPAEIGMEHAGPKMIPKASSSFKVTAEFPIIVFLLFQTYKDLIPKMLPLLAPLVLQFISLRPPPQAEARRLAESQKEVFIGVVPSLRRNHLYNDLISAQIKSFSFLAYLLRSFGAALKQFESSIPICTLQLFMDCPSELYQTRRELLVATRHVLSTDYLRGFLPYVDQLLDTKILVGSGITSQHSLRPMAFSMLADMLHYVRMELSPQQIYKVILLYFSILMDDFYTSAIQAMATKLILNLVERIVALEDFSTSRSLLFAILLCLLRKLTSLNFEFMKLRDSLQENADLKQIKIEENKHDLPMFENPTGAAQPSGLDKLKDCIFLFKNTLLGIKPVLFGLKQRNIPLANGSIFTAQEWSEKLHLSSTNEVLLFRRLLVESLKGFSYYQTDEKTGVFKSSKNLAYSQLDSSLTTNPSKLLEEKELLEMLATLFLHLDPSVFVEILESEFPNIFECLVDNLALLHIFQFWMSNEVTSVNCTGIVLSFCCDNLAKIGSGQSTRVSVLLRLFKLAFMTVNVFPEKNAEVLRPHISYIISTSLELTTDAVEPLNYVYLMKALFRNISGGKFDSLYKEILPLLQVMLECFNRLIFTVTSTSQKELYAELCLTLPIRLSVLLPHMNFLMKPLIVALKGPPEIASQGLRIFELCLDNLTQEFLDPLLDSIMPDLLICLWNHSRLNQSNNQLHQSAVRILGKMGGRNRQIYLGTFGFDFLQDENIFPSIQFSFQGSSQNFSLEHSKFLMSSCAVLNNQNSDLEEKKQAFQMVKNSYLLLFASAKPDEDFWESIDTMCRAVVDRMDKNLQQVSNGRLCPDKDESYYLQRSIVSNIFKSLVGSMSCVEFVAEARETINRSLEWLIVLDLVNYADSLQIKDQNIFDNLQSIKMLDLTTCINGIFESLCSENENTRSNALSCIDHYLNAHKMLLNTTLDISKLPSFQNLVTVFCQSCHKELWYQKNAGFLGLKAILSYDSHHKLWIQDRLHDILKALFFILKDTPTDYGVLKLTEVRSFIVDITTQFCILQDVLAPKERANNIINAFSPFFLELLHPNDHVRNTVQQAIENISNNSKLSVVDLLLPIKDRLLSPIFGKPLRALPFTIQIGHIDAITYCLHRSPSFLDLTDELYRLFRETIALADAEDEALVTMLKTSQSKDSSSLRKLRATCLHLLFASLVAHKFDQPQHAQTRTKIIAIFFKDLYSPHKEIYSVAIDALRHVLSQNQKLPKELLQSGLRPILMNLSDHNKLSVNGLEGLSRLLRLLTNYFKVEIGRKLLQHLNVLSDSKVLETASLSLLKTNPRIEIIVSLVNVFRDLPPLSAQFLGDLLSSVVNIEAVLRKYSNSPLRKPLYSFMDLHANDTWMYILNNARNGDLITRFVGALNDPMSEKLRETAGNYWGKLLELISQPVSVENLAPMYAVDIIATVFPYISANVDAGVISAKFIVLSKSLYGMLSSYNEYLFLPIRRCISSITKMLLSSLKKIEKKLEFSLEVFRFKADDDNDFLPEYIDSLCGCLITSTSAAEKKSIFLVCCSIVGDKSVRPFFKAFLLDKVINPLVFKSCGENNFIDKDVVHSVYTHVWRVSIRDFAEVSGATDSFYMGIMCLTTALCKYHSALLNDYRKSVIMSAWNYIKLEDPMVKQAAYATIACFISAYDTPAKIVTPVYVSILKTYQPEVRAFIEFSLASLLSVLTARLSSPSDSTFPLWAKLPRLVISEDVQGISQPLTVYQFICKAPDLFFSCCSHFIVPMVNALPKLVSFSSASTEPRKLALDIVQTFINWQRKQNESENSETTLFSNSHIEAILTFLIKFLSLFPEPVEENPLSKKGLSLFNDLFSFPRWKDCQLNSNFFEKILVDMDFNDNNYRTVANTLFVFGVILKNRGMEYIQREYSHIIALIDKSLRCGKLPVTHSLEQIILLLLQSHPTQAEEEEDTNEADDFKQLLLSVIHDNLAAATNIESAICYLQIVKSSNPEALDGLLLPLNKCFQKVARDHIVACMQSAIQASGKVTLPSASDTVSKLLISFIEIIRVRMASLGDQRRWFLSVVVQLLEKSSSFELCEHILNVTKEWVIVKRDSFLTVKEKTALLLKMRTFEGRFDNKLYIEACDLLSTIYRDPIFAHTELTARLKQAFLLATASKDTKIRMDFMDIFDSSMSRNVYSRLTFILDATSWDTIPSIYWIKQANYILLGAINAKQPVRLTDNSLRFAPVPMTKPILSSLPEVFSKHNGSAIPLGRFTFFKQLDLFLKRNKELTVQKIIFPLAHIQMLSDADANKLWQYIFPLAWKILSSDNRSDLSKSLIYLLTRDYHIKQVNNRPNVISTLVSSFVKCAAKLELPPHLVKYLGKLYGVYHESVSLLEIQLSDKYDMYQNAKVQESRADAVAELYASLNEDDMFYGHWRRNCKYLQTQVALSYEQLGMWGRAQQLYEQAQTKARSEAIPFSESEYNLWEDQWVMCAQKLQQWDVLTELAKHEGSSELLLECAWRISDWSNNRESLEVAIKSLSDVPTPRKLTFQCFMTLQKSVSQPLAIKEFQQVLSEAIQLALIKWHQLPEKVNQSHYSLLHLFQQFVELQEAATIYSHLNAINFQNLPTNVQLIKSALQVWQERLPNVWDDINLWRDLISWRQIVFSMINRVYLPLVPTIQANSSADSSNPPNTSFLFRGYHETAWLINRFAHVARKHKLPSVCLNQLTKIYTLPNIEIQEAFYKLREQVLCYLQNPRDLKTGLEVVTNTNLMYFNSRQKSEFVTLKGKFLEKLNRGEEANQMYAAAVQIDLGLPKAWAEWGRYNDLLFNKSPDNLSAACNAISCYLQAAGTYQSSKARKMLARVLWLLSLNDSAGTIVKAFESYKGDIPVWHWLTFIPQLLNSLSKGDTKCAPVVLKKIAKSYPQALFFTLRTAREDIAQVKRTEMAAWKSNTTDENKRNEDILSIQSNFLSTNQSTNAPATNKEDGLSKKVWEYIDEIMSILKTAYPLLALTMETLVDQIQAKFKCKNDGDAFRLVVALLNDAVQHSIRLGIVTDEMKLPSSTESNLSLFADNILPDYCKQLFKEDFIVNSNGLKSYIFKLRKWRSYFERLLSKVPKKQYLEQYSSFLCEFHHQKFDEIEVPGQYLLHKDNNNSFSCIERFLPEVELIVGHGVCYRRLSIRSNGGTIHPFVIQYPSARNSRREERFMQLTRYLNDALALNCETRRRCLKFYIPAVIPLSSHIRLLEDQPSSITLQKIYEIYSERNNFSRDDPKELFTNELSKHMMELNSQISQESTDAEKLANRKQLFSRRIGMFENIQKLYSPSTILKDYFSSIFTNYSDLWLFRKNFSYQYACFSFITYILSINNRIPAKLVFSRDSGGVWTTEALPSMVSSTPVYHNGEIVPFRFTPNIKEFIGKTCTEGLLGPSIMAIARALSKPDFDLDMYLGIFIRDDLFWWLAQQTKGVPADFSMLNKVNSNTDLIMRRVASLSQVAYGNLPVNQTAIDYLAQASSSKVLAQMDVLWAPWL.

The tract at residues 1–2483 (MDVSQCEHWH…RDYHIKQVNN (2483 aa)) is HEAT. HEAT repeat units follow at residues 46 to 88 (ETFI…KSGS), 94 to 131 (AFVN…DHSS), 216 to 256 (QTYK…SQKE), 339 to 382 (RGFL…YVRM), 431 to 468 (STSR…NADL), 601 to 640 (KELL…NLAL), 750 to 788 (KEIL…TLPI), 795 to 831 (PHMN…NLTQ), 836 to 879 (PLLD…RNRQ), 1061 to 1098 (LDLT…AHKM), 1154 to 1191 (DRLH…DITT), 1207 to 1244 (NNII…NSKL), 1311 to 1348 (AEDE…SLVA), 1358 to 1395 (QTRT…QNQK), 1399 to 1435 (ELLQ…LLTN), 1438 to 1469 (KVEI…LKTN), 1538 to 1576 (ARNG…LISQ), 1586 to 1625 (MYAV…MLSS), 1634 to 1669 (IRRC…KADD), 1672 to 1710 (DFLP…DKSV), 1825 to 1862 (TPAK…VLTA), 1916 to 1952 (VPMV…WQRK), 1970 to 2009 (EAIL…FPRW), 2103 to 2141 (NEAD…SSNP), 2158 to 2195 (VARD…SFIE), 2206 to 2244 (DQRR…VKRD), 2379 to 2417 (PMTK…FLKR), and 2443 to 2480 (KLWQ…HIKQ). The interval 197–219 (ASSSFKVTAEFPIIVFLLFQTYK) is disordered. The span at 206-219 (EFPIIVFLLFQTYK) shows a compositional bias: low complexity. The interval 2484–3661 (RPNVISTLVS…QMDVLWAPWL (1178 aa)) is head. An FAT domain is found at 2508–3069 (LVKYLGKLYG…FFTLRTARED (562 aa)). Positions 3295-3631 (LPEVELIVGH…SLSQVAYGNL (337 aa)) constitute a PI3K/PI4K catalytic domain. The G-loop stretch occupies residues 3301–3307 (IVGHGVC). The segment at 3497 to 3505 (SINNRIPAK) is catalytic loop. An activation loop region spans residues 3517–3542 (TTEALPSMVSSTPVYHNGEIVPFRFT). One can recognise an FATC domain in the interval 3629–3661 (GNLPVNQTAIDYLAQASSSKVLAQMDVLWAPWL).

Belongs to the PI3/PI4-kinase family. TRA1 subfamily. Component of the 1.8 MDa SAGA (Spt-Ada-Gcn5 acetyltransferase) complex, which is composed of 19 subunits tra1, spt7, taf5, ngg1/ada3, sgf73, spt20, spt8, taf12, taf6, hfi1/ada1, ubp8, gcn5, ada2, spt3, sgf29, taf10, taf9, sgf11 and sus1. The SAGA complex is composed of 4 modules, namely the HAT (histone acetyltransferase) module (gcn5, ada2, ngg1/ada3 and sgf29), the DUB (deubiquitinating) module (ubp8, sgf11, sgf73 and sus1), the core or TAF (TBP-associated factor) module (taf5, taf6, taf9, taf10 and taf12), and the Tra1 or SPT (Suppressor of Ty) module (tra1, hfi1/ada1, spt3, spt7, spt8 and spt20). The Tra1/SPT module binds activators, the core module recruits TBP (TATA-binding protein), the HAT module contains the histone H3 acetyltransferase gcn5, and the DUB module comprises the histone H2B deubiquitinase ubp8. Requires Hsp90 and its co-chaperone, the Triple-T complex (TTT), for its incorporation into SAGA. Interacts with tel2.

Its subcellular location is the nucleus. Functionally, essential scaffold subunit of the transcription coactivator SAGA complex. SAGA acts as a general cofactor required for essentially all RNA polymerase II transcription. At the promoters, SAGA is required for transcription pre-initiation complex (PIC) recruitment. It influences RNA polymerase II transcriptional activity through different activities such as TBP interaction (via core/TAF module) and promoter selectivity, interaction with transcription activators (via Tra1/SPT module), and chromatin modification through histone acetylation (via HAT module) and deubiquitination (via DUB module). SAGA preferentially acetylates histones H3 (to form H3K9ac, H3K14ac, H3K18ac and H3K23ac) and H2B and deubiquitinates histone H2B. SAGA interacts with DNA via upstream activating sequences (UASs). Required for SAGA recruitment in a gene-specific manner. This is SAGA complex/NuA4 acetyltransferase complex subunit Tra1 (tra1) from Schizosaccharomyces pombe (strain 972 / ATCC 24843) (Fission yeast).